A 414-amino-acid chain; its full sequence is Cytochrome P450 CYP105Q4 (414 aa).

Residues 1–12 (MSDTLASPSPET) are compositionally biased toward polar residues. The interval 1 to 21 (MSDTLASPSPETASGIPDYPM) is disordered. His-108, Gln-302, Arg-304, His-361, and Cys-363 together coordinate heme.

The protein belongs to the cytochrome P450 family. It depends on heme as a cofactor.

Functionally, can bind oleic-acid derivatives, amphotericin B like precursors and a variety of nitrogen ligand donors. In Mycobacterium marinum (strain ATCC BAA-535 / M), this protein is Cytochrome P450 CYP105Q4.